The chain runs to 141 residues: Hemoglobin subunit alpha (141 aa).

The region spanning 1–141 (VLSSTDKSNV…VSTVLTSKYR (141 aa)) is the Globin domain. A Phosphoserine modification is found at serine 3. Lysine 7 and lysine 11 each carry N6-succinyllysine. The residue at position 16 (lysine 16) is an N6-acetyllysine; alternate. Lysine 16 carries the N6-succinyllysine; alternate modification. Residue tyrosine 24 is modified to Phosphotyrosine. Phosphoserine is present on serine 35. An N6-succinyllysine modification is found at lysine 40. Histidine 58 lines the O2 pocket. Histidine 87 contacts heme b. Serine 102 is modified (phosphoserine). Position 108 is a phosphothreonine (threonine 108). A phosphoserine mark is found at serine 124 and serine 131. A phosphothreonine mark is found at threonine 134 and threonine 137. Serine 138 carries the phosphoserine modification.

Belongs to the globin family. Heterotetramer of two alpha chains and two beta chains. Red blood cells.

In terms of biological role, involved in oxygen transport from the lung to the various peripheral tissues. Its function is as follows. Hemopressin acts as an antagonist peptide of the cannabinoid receptor CNR1. Hemopressin-binding efficiently blocks cannabinoid receptor CNR1 and subsequent signaling. In Pteropus poliocephalus (Grey-headed flying fox), this protein is Hemoglobin subunit alpha (HBA).